Here is a 160-residue protein sequence, read N- to C-terminus: MATLKKPDLSDPKLRAKLAKGMGHNYYGEPAWPNDLLYVFPVVIMGTFACIVALSVLDPAMVGEPADPFATPLEILPEWYLYPVFQILRSVPNKLLGVLLMASVPLGLILVPFIENVNKFQNPFRRPVATTIFLFGTLVTIWLGIGATFPLDKTLTLGLF.

At 1–35 (MATLKKPDLSDPKLRAKLAKGMGHNYYGEPAWPND) the chain is on the cytoplasmic side. A helical transmembrane segment spans residues 36–56 (LLYVFPVVIMGTFACIVALSV). The Lumenal, thylakoid portion of the chain corresponds to 57 to 94 (LDPAMVGEPADPFATPLEILPEWYLYPVFQILRSVPNK). Residues 95 to 115 (LLGVLLMASVPLGLILVPFIE) traverse the membrane as a helical segment. Over 116–130 (NVNKFQNPFRRPVAT) the chain is Cytoplasmic. Residues 131–151 (TIFLFGTLVTIWLGIGATFPL) traverse the membrane as a helical segment. Residues 152-160 (DKTLTLGLF) lie on the Lumenal, thylakoid side of the membrane.

It belongs to the cytochrome b family. PetD subfamily. The 4 large subunits of the cytochrome b6-f complex are cytochrome b6, subunit IV (17 kDa polypeptide, PetD), cytochrome f and the Rieske protein, while the 4 small subunits are PetG, PetL, PetM and PetN. The complex functions as a dimer.

Its subcellular location is the cellular thylakoid membrane. Its function is as follows. Component of the cytochrome b6-f complex, which mediates electron transfer between photosystem II (PSII) and photosystem I (PSI), cyclic electron flow around PSI, and state transitions. The sequence is that of Cytochrome b6-f complex subunit 4 from Mastigocladus laminosus (Fischerella sp.).